Consider the following 445-residue polypeptide: Tubulin beta chain (445 aa).

Positions 11, 69, 138, 142, 143, 144, 204, and 226 each coordinate GTP. E69 contributes to the Mg(2+) binding site.

Belongs to the tubulin family. Dimer of alpha and beta chains. A typical microtubule is a hollow water-filled tube with an outer diameter of 25 nm and an inner diameter of 15 nM. Alpha-beta heterodimers associate head-to-tail to form protofilaments running lengthwise along the microtubule wall with the beta-tubulin subunit facing the microtubule plus end conferring a structural polarity. Microtubules usually have 13 protofilaments but different protofilament numbers can be found in some organisms and specialized cells. It depends on Mg(2+) as a cofactor.

It localises to the cytoplasm. The protein resides in the cytoskeleton. In terms of biological role, tubulin is the major constituent of microtubules, a cylinder consisting of laterally associated linear protofilaments composed of alpha- and beta-tubulin heterodimers. Microtubules grow by the addition of GTP-tubulin dimers to the microtubule end, where a stabilizing cap forms. Below the cap, tubulin dimers are in GDP-bound state, owing to GTPase activity of alpha-tubulin. In Leishmania mexicana, this protein is Tubulin beta chain.